Consider the following 422-residue polypeptide: Cytokine receptor-like factor 1 (422 aa).

Residues 1–37 form the signal peptide; the sequence is MPAGRRGPAAQSARRPPPLLPLLLLLCVLGAPRAGSG. The 94-residue stretch at 38-131 folds into the Ig-like C2-type domain; it reads AHTAVISPQD…SILAGSCLYV (94 aa). Asparagine 92, asparagine 104, and asparagine 140 each carry an N-linked (GlcNAc...) asparagine glycan. Fibronectin type-III domains lie at 137-232 and 237-341; these read KPVN…ILDV and PPPD…TPRS. Cysteine 143 and cysteine 153 are oxidised to a cystine. Asparagine 168 carries N-linked (GlcNAc...) asparagine glycosylation. Cysteine 184 and cysteine 195 are joined by a disulfide. Residue serine 219 is modified to Phosphoserine. A glycan (N-linked (GlcNAc...) asparagine) is linked at asparagine 292. A WSXWS motif motif is present at residues 327–331; that stretch reads WSEWS. The interval 332–363 is disordered; it reads HPTAASTPRSERPGPGGGACEPRGGEPSSGPV. Asparagine 382 carries N-linked (GlcNAc...) asparagine glycosylation. Residues 399–422 form a disordered region; it reads HKTRNQDEGILPSGRRGTARGPAR.

This sequence belongs to the type I cytokine receptor family. Type 3 subfamily. As to quaternary structure, forms covalent di- and tetramers. Forms a heteromeric complex with cardiotrophin-like cytokine CLCF1/CLC; the CRLF1-CLCF1 complex is a ligand for the ciliary neurotrophic factor receptor/CNTFR. The CRLF1-CLCF1 heterodimer binds SORL1 (via N-terminal ectodomain); within this complex, the interaction is mediated predominantly by the CRLF1 moiety. The tripartite signaling complex formed by CRLF1, CLCF1 and CNTFR also binds SORL1. As to expression, highest levels of expression observed in spleen, thymus, lymph node, appendix, bone marrow, stomach, placenta, heart, thyroid and ovary. Strongly expressed also in fetal lung.

It is found in the secreted. Its function is as follows. In complex with CLCF1, forms a heterodimeric neurotropic cytokine that plays a crucial role during neuronal development. May also play a regulatory role in the immune system. The protein is Cytokine receptor-like factor 1 (CRLF1) of Homo sapiens (Human).